We begin with the raw amino-acid sequence, 509 residues long: Coiled-coil domain-containing protein 181 (509 aa).

2 disordered regions span residues Met1–Glu122 and Phe237–Lys369. 2 stretches are compositionally biased toward basic and acidic residues: residues Asp22–Ser33 and Ala41–Glu56. The span at Glu60–Asp69 shows a compositional bias: polar residues. Basic and acidic residues-rich tracts occupy residues Asn70 to Asp82 and Ile266 to Gly275. Polar residues predominate over residues Arg319–Cys333. Coiled coils occupy residues Ser335–Ala377 and Leu418–Gln488. The segment covering Arg337–Lys369 has biased composition (basic and acidic residues).

It belongs to the CCDC181 family. In terms of assembly, homodimer. Interacts with HOOK1. Interacts with HOOK2. Interacts with HOOK3. Predominantly expressed in testis. Expressed at lower level in brain, eye, trachea and lung. Barely expressed in tongue, heart, liver, kidney, spleen and muscle. Present at high level in elongating spermatids, whereas lower levels are observed in round spermatids (at protein level).

The protein resides in the cytoplasm. It is found in the cytoskeleton. The protein localises to the cell projection. Its subcellular location is the cilium. It localises to the flagellum. Its function is as follows. Microtubule-binding protein that localizes to the microtubular manchette of elongating spermatids. The protein is Coiled-coil domain-containing protein 181 of Mus musculus (Mouse).